The primary structure comprises 270 residues: Hairy and enhancer of split-related protein helt (270 aa).

Residues 1 to 24 (MNARALYKRPPPVSSSQSEASGKR) form a disordered region. Positions 59–114 (KTPVSHKVIEKRRRDRINRCLNELGKTVPMALAKQNSGKLEKAEILEMTVQYLRAL) constitute a bHLH domain. One can recognise an Orange domain in the interval 136-171 (FHYGYHECMKNLVHYLTTVERMETKDTKYARILAFL).

This sequence belongs to the HEY family.

It is found in the nucleus. Transcriptional repressor which binds preferentially to the canonical E box sequence 5'-CACGCG-3'. The sequence is that of Hairy and enhancer of split-related protein helt (helt) from Danio rerio (Zebrafish).